The sequence spans 234 residues: Sugar fermentation stimulation protein A (234 aa).

A DNA-binding region (H-T-H motif) is located at residues leucine 201–serine 220.

Belongs to the SfsA family.

Functionally, binds to DNA non-specifically. Could be a regulatory factor involved in maltose metabolism. The chain is Sugar fermentation stimulation protein A from Salmonella dublin (strain CT_02021853).